Here is a 273-residue protein sequence, read N- to C-terminus: 4-hydroxy-tetrahydrodipicolinate reductase (273 aa).

Residues 12-17 and glutamate 38 each bind NAD(+); that span reads GAGGRM. Arginine 39 contributes to the NADP(+) binding site. Residues 102–104 and 126–129 each bind NAD(+); these read GTT and AANF. The active-site Proton donor/acceptor is the histidine 159. Histidine 160 lines the (S)-2,3,4,5-tetrahydrodipicolinate pocket. The Proton donor role is filled by lysine 163. 169 to 170 lines the (S)-2,3,4,5-tetrahydrodipicolinate pocket; sequence GT.

Belongs to the DapB family. As to quaternary structure, homotetramer.

The protein localises to the cytoplasm. It catalyses the reaction (S)-2,3,4,5-tetrahydrodipicolinate + NAD(+) + H2O = (2S,4S)-4-hydroxy-2,3,4,5-tetrahydrodipicolinate + NADH + H(+). The enzyme catalyses (S)-2,3,4,5-tetrahydrodipicolinate + NADP(+) + H2O = (2S,4S)-4-hydroxy-2,3,4,5-tetrahydrodipicolinate + NADPH + H(+). It participates in amino-acid biosynthesis; L-lysine biosynthesis via DAP pathway; (S)-tetrahydrodipicolinate from L-aspartate: step 4/4. Its function is as follows. Catalyzes the conversion of 4-hydroxy-tetrahydrodipicolinate (HTPA) to tetrahydrodipicolinate. In Escherichia coli O157:H7, this protein is 4-hydroxy-tetrahydrodipicolinate reductase.